Here is a 177-residue protein sequence, read N- to C-terminus: Adenine phosphoribosyltransferase (177 aa).

It belongs to the purine/pyrimidine phosphoribosyltransferase family. In terms of assembly, homodimer.

It is found in the cytoplasm. The enzyme catalyses AMP + diphosphate = 5-phospho-alpha-D-ribose 1-diphosphate + adenine. Its pathway is purine metabolism; AMP biosynthesis via salvage pathway; AMP from adenine: step 1/1. Functionally, catalyzes a salvage reaction resulting in the formation of AMP, that is energically less costly than de novo synthesis. The protein is Adenine phosphoribosyltransferase of Mycoplasma pneumoniae (strain ATCC 29342 / M129 / Subtype 1) (Mycoplasmoides pneumoniae).